Consider the following 254-residue polypeptide: Phosphonates import ATP-binding protein PhnC (254 aa).

One can recognise an ABC transporter domain in the interval 2–246 (IQLKNVSKIY…VFDDIYNGGN (245 aa)). An ATP-binding site is contributed by 35–42 (GLSGAGKS).

This sequence belongs to the ABC transporter superfamily. Phosphonates importer (TC 3.A.1.9.1) family. As to quaternary structure, the complex is composed of two ATP-binding proteins (PhnC), two transmembrane proteins (PhnE) and a solute-binding protein (PhnD).

Its subcellular location is the cell membrane. The enzyme catalyses phosphonate(out) + ATP + H2O = phosphonate(in) + ADP + phosphate + H(+). Functionally, part of the ABC transporter complex PhnCDE involved in phosphonates import. Responsible for energy coupling to the transport system. The protein is Phosphonates import ATP-binding protein PhnC of Lactobacillus johnsonii (strain CNCM I-12250 / La1 / NCC 533).